Consider the following 281-residue polypeptide: Inhibitor of growth protein 2 (281 aa).

A coiled-coil region spans residues 49–101; sequence VLRELDNKYQETLKEIDDVYEKYKKEDDSNQKKRLQQHLQRALINSQELGDEK. Residues 123–204 form a disordered region; sequence SQCFQDPAES…AKQEREASPV (82 aa). The span at 131–141 shows a compositional bias: basic and acidic residues; that stretch reads ESERASDKSKM. The segment covering 182–194 has biased composition (basic residues); sequence KRSKSAKKKKRSK. Residue lysine 196 forms a Glycyl lysine isopeptide (Lys-Gly) (interchain with G-Cter in SUMO1) linkage. The PHD-type zinc-finger motif lies at 213–262; sequence PTYCLCNQVSYGEMIGCDNEQCPIEWFHFSCVSLTYKPKGKWYCPKCRGD. Residues cysteine 216, cysteine 218, cysteine 229, cysteine 234, histidine 240, cysteine 243, cysteine 256, and cysteine 259 each coordinate Zn(2+). The span at 261–275 shows a compositional bias: basic and acidic residues; the sequence is GDNEKTMDKSTEKTK. A disordered region spans residues 261–281; it reads GDNEKTMDKSTEKTKKERRAR. The interval 265 to 281 is PBR; it reads KTMDKSTEKTKKERRAR.

It belongs to the ING family. As to quaternary structure, interacts with H3K4me3 and to a lesser extent with H3K4me2. Component of a mSin3A-like complex at least consisting of SIN3A, HDAC1, HDAC2, RBBP4/RbAp48, RBBP7/RbAp46, SAP30 and ING2. In terms of processing, sumoylation enhances its association with SIN3A and is required for binding to some target gene promoters, this is the case for TMEM71.

The protein localises to the nucleus. In terms of biological role, seems to be involved in p53/TP53 activation and p53/TP53-dependent apoptotic pathways, probably by enhancing acetylation of p53/TP53. Component of a mSin3A-like corepressor complex, which is probably involved in deacetylation of nucleosomal histones. ING2 activity seems to be modulated by binding to phosphoinositides (PtdInsPs). The protein is Inhibitor of growth protein 2 (Ing2) of Mus musculus (Mouse).